Here is a 359-residue protein sequence, read N- to C-terminus: D-alanine--D-alanine ligase (359 aa).

The 206-residue stretch at 141-346 (KRIFKEAGLP…YSTLLDELIN (206 aa)) folds into the ATP-grasp domain. 172–227 (IEHLGYPCFVKPANLGSSVGITKVHNEEELPGALKLAAKYDRKLLIERGIDAREIE) is an ATP binding site. Mg(2+) is bound by residues Asp299, Glu313, and Asn315.

This sequence belongs to the D-alanine--D-alanine ligase family. It depends on Mg(2+) as a cofactor. Mn(2+) serves as cofactor.

It is found in the cytoplasm. The enzyme catalyses 2 D-alanine + ATP = D-alanyl-D-alanine + ADP + phosphate + H(+). The protein operates within cell wall biogenesis; peptidoglycan biosynthesis. Its function is as follows. Cell wall formation. In Thermoanaerobacter pseudethanolicus (strain ATCC 33223 / 39E) (Clostridium thermohydrosulfuricum), this protein is D-alanine--D-alanine ligase.